Reading from the N-terminus, the 303-residue chain is Uridine diphosphate glucose pyrophosphatase NUDT22 (303 aa).

Positions 56, 87, 139, 144, 151, 156, and 158 each coordinate substrate. One can recognise a Nudix hydrolase domain in the interval 118–285; that stretch reads ADPLGVGAAL…KGAIILYNRV (168 aa). Residues 148–168 form a disordered region; it reads GLVDVPGGHPEPQALCPGGSP. The Nudix box motif lies at 175–196; that stretch reads GQLVVHELFSSVLQEICDEVNL. Glu-189 and Glu-193 together coordinate Mg(2+). Residue Ser-274 coordinates substrate.

The protein belongs to the Nudix hydrolase family. It depends on Mg(2+) as a cofactor.

It catalyses the reaction UDP-sugar + H2O = UMP + alpha-D-aldose 1-phosphate.. Hydrolyzes UDP-glucose to glucose 1-phosphate and UMP and UDP-galactose to galactose 1-phosphate and UMP. Preferred substrate is UDP-glucose. This is Uridine diphosphate glucose pyrophosphatase NUDT22 (NUDT22) from Homo sapiens (Human).